Consider the following 562-residue polypeptide: Cytosolic Fe-S cluster assembly factor nar1 (562 aa).

Cysteine 20 lines the [4Fe-4S] cluster pocket. The tract at residues proline 28–valine 47 is disordered. Positions lysine 29–glutamate 40 are enriched in polar residues. Residues cysteine 62, cysteine 65, cysteine 68, cysteine 214, and cysteine 269 each contribute to the [4Fe-4S] cluster site. A disordered region spans residues alanine 439 to glycine 462. Residues glutamine 452–glycine 462 are compositionally biased toward polar residues. Positions 475 and 479 each coordinate [4Fe-4S] cluster. 2 disordered regions span residues arginine 492–histidine 513 and histidine 541–threonine 562. Over residues alanine 494–glutamate 505 the composition is skewed to polar residues.

Belongs to the NARF family.

Its function is as follows. Component of the cytosolic Fe/S protein assembly machinery. Required for maturation of extramitochondrial Fe/S proteins. May play a role in the transfer of pre-assembled Fe/S clusters to target apoproteins. This is Cytosolic Fe-S cluster assembly factor nar1 (nar1) from Aspergillus flavus (strain ATCC 200026 / FGSC A1120 / IAM 13836 / NRRL 3357 / JCM 12722 / SRRC 167).